We begin with the raw amino-acid sequence, 361 residues long: Cyclic AMP receptor-like protein C (361 aa).

The Extracellular portion of the chain corresponds to methionine 1–serine 18. Residues valine 19 to isoleucine 39 form a helical membrane-spanning segment. Topologically, residues serine 40–lysine 113 are cytoplasmic. The chain crosses the membrane as a helical span at residues leucine 114–isoleucine 134. Topologically, residues serine 135 to alanine 166 are extracellular. The chain crosses the membrane as a helical span at residues isoleucine 167–phenylalanine 187. At histidine 188–lysine 197 the chain is on the cytoplasmic side. The chain crosses the membrane as a helical span at residues tyrosine 198–isoleucine 218. Residues threonine 219–methionine 238 are Extracellular-facing. Residues glutamate 239–phenylalanine 259 form a helical membrane-spanning segment. The Cytoplasmic segment spans residues arginine 260 to leucine 292. The chain crosses the membrane as a helical span at residues tyrosine 293 to phenylalanine 313. The Extracellular segment spans residues serine 314–phenylalanine 318. Residues phenylalanine 319 to isoleucine 339 traverse the membrane as a helical segment. The Cytoplasmic portion of the chain corresponds to tyrosine 340–glutamine 361.

It belongs to the G-protein coupled receptor 5 family.

Its subcellular location is the membrane. Its function is as follows. Receptor for cAMP. The protein is Cyclic AMP receptor-like protein C (crlC) of Dictyostelium discoideum (Social amoeba).